The following is a 184-amino-acid chain: Small ribosomal subunit protein uS4 (184 aa).

In terms of domain architecture, S4 RNA-binding spans 108–172 (RRLQTQVHRL…SPMTKESHPE (65 aa)). The interval 163 to 184 (SPMTKESHPERPAQIAASVVEE) is disordered.

This sequence belongs to the universal ribosomal protein uS4 family. Part of the 30S ribosomal subunit. Contacts protein S5. The interaction surface between S4 and S5 is involved in control of translational fidelity.

In terms of biological role, one of the primary rRNA binding proteins, it binds directly to 16S rRNA where it nucleates assembly of the body of the 30S subunit. Functionally, with S5 and S12 plays an important role in translational accuracy. The chain is Small ribosomal subunit protein uS4 from Methanococcoides burtonii (strain DSM 6242 / NBRC 107633 / OCM 468 / ACE-M).